Here is a 639-residue protein sequence, read N- to C-terminus: NADP-dependent malic enzyme, chloroplastic (639 aa).

A chloroplast-targeting transit peptide spans 1–49 (MLSARAAATAAAAAASPLWKRGEGGSSGSGSGCTSCREVRRRAAAVRVR). The interval 15–34 (ASPLWKRGEGGSSGSGSGCT) is disordered. The Proton donor role is filled by tyrosine 187. Arginine 240 is an NAD(+) binding site. The active-site Proton acceptor is lysine 258. Positions 330, 331, and 354 each coordinate a divalent metal cation. Aspartate 354 provides a ligand contact to NAD(+). 383 to 399 (LFLGAGEAGTGIAELIA) is a binding site for NADP(+). Residue asparagine 495 coordinates NAD(+).

Belongs to the malic enzymes family. Homotetramer. It depends on Mg(2+) as a cofactor. Requires Mn(2+) as cofactor.

Its subcellular location is the plastid. It is found in the chloroplast. The catalysed reaction is (S)-malate + NADP(+) = pyruvate + CO2 + NADPH. It catalyses the reaction oxaloacetate + H(+) = pyruvate + CO2. Its pathway is photosynthesis; C4 acid pathway. Its function is as follows. The chloroplastic ME isoform decarboxylates malate shuttled from neighboring mesophyll cells. The CO(2) released is then refixed by ribulose-bisphosphate carboxylase. This pathway eliminates the photorespiratory loss of CO(2) that occurs in most plants. The chain is NADP-dependent malic enzyme, chloroplastic (ME6) from Oryza sativa subsp. japonica (Rice).